Consider the following 238-residue polypeptide: Triggering receptor expressed on myeloid cells 1 (238 aa).

Residues 1–20 (MRSARLGRLLWMLFITEIQA) form the signal peptide. Positions 21 to 129 (ATELPEEKYI…KDPIILFYPV (109 aa)) constitute an Ig-like V-type domain. At 21–210 (ATELPEEKYI…DITRDTEISL (190 aa)) the chain is on the extracellular side. Cys-41 and Cys-113 form a disulfide bridge. Asn-135 carries an N-linked (GlcNAc...) asparagine glycan. The disordered stretch occupies residues 141–169 (PASAETPTQSCSPTTTLPPTTTTNRHRPR). Over residues 146-163 (TPTQSCSPTTTLPPTTTT) the composition is skewed to low complexity. N-linked (GlcNAc...) asparagine glycosylation is present at Asn-198. The helical transmembrane segment at 211–231 (ILPAVCGLLSKSLVFIVLFVV) threads the bilayer. Residues 232–238 (TRMSFTP) are Cytoplasmic-facing.

Monomer. Homomultimer; when activated. Interacts with TYROBP/DAP12. Interacts with TLR4.

The protein resides in the cell membrane. Its function is as follows. Cell surface receptor that plays important roles in innate and adaptive immunity by amplifying inflammatory responses. Upon activation by various ligands such as PGLYRP1, HMGB1 or HSP70, multimerizes and forms a complex with transmembrane adapter TYROBP/DAP12. In turn, initiates a SYK-mediated cascade of tyrosine phosphorylation, activating multiple downstream mediators such as BTK, MAPK1, MAPK3 or phospholipase C-gamma. This cascade promotes the neutrophil- and macrophage-mediated release of pro-inflammatory cytokines and/or chemokines, as well as their migration and thereby amplifies inflammatory responses that are triggered by bacterial and fungal infections. By also promoting the amplification of inflammatory signals that are initially triggered by Toll-like receptor (TLR) and NOD-like receptor engagement, plays a major role in the pathophysiology of acute and chronic inflammatory diseases of different etiologies including septic shock and atherosclerosis. The chain is Triggering receptor expressed on myeloid cells 1 (TREM1) from Sus scrofa (Pig).